The primary structure comprises 122 residues: Small ribosomal subunit protein uS13 (122 aa).

The disordered stretch occupies residues 95–122 (GLPVRGQRTKTNSRTRKGRRKTVANKKK). Residues 101–122 (QRTKTNSRTRKGRRKTVANKKK) show a composition bias toward basic residues.

Belongs to the universal ribosomal protein uS13 family. Part of the 30S ribosomal subunit. Forms a loose heterodimer with protein S19. Forms two bridges to the 50S subunit in the 70S ribosome.

In terms of biological role, located at the top of the head of the 30S subunit, it contacts several helices of the 16S rRNA. In the 70S ribosome it contacts the 23S rRNA (bridge B1a) and protein L5 of the 50S subunit (bridge B1b), connecting the 2 subunits; these bridges are implicated in subunit movement. Contacts the tRNAs in the A and P-sites. In Protochlamydia amoebophila (strain UWE25), this protein is Small ribosomal subunit protein uS13.